Consider the following 356-residue polypeptide: MSSISDLVNLNLSDSTERVIAEYIWVGGSGMDMRSKARTLSGPVKDPSKLPKWNYDGSSTGQAPGQDSEVILYPQTIFRDPFRRGNNILVMCDAYTPAGEPIPTNKRHNAAKIFSNPEVVAEEPWYGIEQEYTLLQKDVQWPVGWPLGGFPGPQGPYYCGIGANKAFGRDIVDSHYKACLYAGINISGINGEVMPGQWEFQVGPSVGISAADELWVARYILERITEIAGVVLSFDPKPIQGDWNGAGAHTNYSTKSMRNDGGYEVIKKAITKLEKRHKEHIAAYGEGNERRLTGKHETADMNTFIWGVANRGASIRVGRDTEKAGKGYFEDRRPASNMDPYVVTSMIAETTLLWKP.

Residues 19-99 (VIAEYIWVGG…VMCDAYTPAG (81 aa)) enclose the GS beta-grasp domain. In terms of domain architecture, GS catalytic spans 106 to 356 (KRHNAAKIFS…IAETTLLWKP (251 aa)).

Belongs to the glutamine synthetase family. In terms of assembly, homooctamer. As to expression, this is a nodule isozyme.

The protein resides in the cytoplasm. The catalysed reaction is L-glutamate + NH4(+) + ATP = L-glutamine + ADP + phosphate + H(+). The polypeptide is Glutamine synthetase N-1 (Gln-gamma) (Phaseolus vulgaris (Kidney bean)).